Consider the following 145-residue polypeptide: Holo-[acyl-carrier-protein] synthase (145 aa).

2 residues coordinate Mg(2+): Asp-9 and Glu-59.

This sequence belongs to the P-Pant transferase superfamily. AcpS family. Mg(2+) is required as a cofactor.

Its subcellular location is the cytoplasm. It catalyses the reaction apo-[ACP] + CoA = holo-[ACP] + adenosine 3',5'-bisphosphate + H(+). Functionally, transfers the 4'-phosphopantetheine moiety from coenzyme A to a Ser of acyl-carrier-protein. The polypeptide is Holo-[acyl-carrier-protein] synthase (Nocardia farcinica (strain IFM 10152)).